The sequence spans 299 residues: pH-regulated antigen PRA1 (299 aa).

Positions 1-15 are cleaved as a signal peptide; that stretch reads MNYLLFCLFFAFSVA. 4 N-linked (GlcNAc...) asparagine glycosylation sites follow: N48, N89, N135, and N208. The tract at residues 253–299 is disordered; sequence FEDSDSGSDSGASSTASSSHQHTDSNPSATTDANSHCHTHADGEVHC. Residues 259–272 show a composition bias toward low complexity; that stretch reads GSDSGASSTASSSH. The segment covering 278 to 288 has biased composition (polar residues); the sequence is NPSATTDANSH.

This sequence belongs to the ZPS1 family. As to quaternary structure, component of a multiprotein complex of 250 kDa composed of at least HYR1, MP65, and PRA1. Interacts with host Integrin alpha-M/beta-2 heterodimer. Also binds human factor H (CFH), CFHR1, plasminogen (PLG), complement C3, and C4BPA. Interacts with ZRT101. In terms of processing, N- and O-glycosylated. The N- and 0-glycosidically linked carbohydrates represent 18 to 20 percent and 3 to 4 percent, respectively, of the molecular mass of PRA1. 0-linked sugar residues may be involved in the interaction with fibrinogen. Contributes highly to the carbohydrate component of the matrix. Treatment with tunicamycin impairs glycosylation.

The protein localises to the secreted. In terms of biological role, cell surface protein involved in the host-parasite interaction during candidal infection. With MP65, represents a major component of the biofilm matrix. As a surface protein, binds the two human complement regulators CFH and CFHR1, as well as plasminogen PLG, mediates complement evasion and extra-cellular matrix interaction and/or degradation. As a released protein, enhances complement control in direct vicinity of the yeast and thus generates an additional protective layer which controls host complement attack, assisting the fungus in escaping host surveillance. Binds to host fluid-phase C3 and blocks cleavage of C3 to C3a and C3b, leading to inhibition of complement activation and protection from uptake of C.albicans by human macrophages. Also mediates human complement control and complement evasion through binding to C4BPA, another human complement inhibitor, as well as through binding to host integrin alpha-M/beta-2. Binds zinc from its environment and then reassociates with ZRT1 to acquire this essential metal. The chain is pH-regulated antigen PRA1 from Candida albicans (strain SC5314 / ATCC MYA-2876) (Yeast).